The chain runs to 117 residues: Large ribosomal subunit protein bL19 (117 aa).

Belongs to the bacterial ribosomal protein bL19 family.

In terms of biological role, this protein is located at the 30S-50S ribosomal subunit interface and may play a role in the structure and function of the aminoacyl-tRNA binding site. This chain is Large ribosomal subunit protein bL19, found in Thermotoga neapolitana (strain ATCC 49049 / DSM 4359 / NBRC 107923 / NS-E).